The chain runs to 505 residues: Protein nucleotidyltransferase YdiU (505 aa).

Residues Gly102, Gly104, Arg105, Lys125, Asp137, Gly138, Arg188, and Arg195 each coordinate ATP. Asp264 functions as the Proton acceptor in the catalytic mechanism. Residues Asn265 and Asp274 each coordinate Mg(2+). Asp274 is a binding site for ATP. The segment at 485–505 is disordered; that stretch reads FADYGKPPAPGEEVQQTFCGT.

Belongs to the SELO family. Requires Mg(2+) as cofactor. Mn(2+) is required as a cofactor.

It catalyses the reaction L-seryl-[protein] + ATP = 3-O-(5'-adenylyl)-L-seryl-[protein] + diphosphate. It carries out the reaction L-threonyl-[protein] + ATP = 3-O-(5'-adenylyl)-L-threonyl-[protein] + diphosphate. The catalysed reaction is L-tyrosyl-[protein] + ATP = O-(5'-adenylyl)-L-tyrosyl-[protein] + diphosphate. The enzyme catalyses L-histidyl-[protein] + UTP = N(tele)-(5'-uridylyl)-L-histidyl-[protein] + diphosphate. It catalyses the reaction L-seryl-[protein] + UTP = O-(5'-uridylyl)-L-seryl-[protein] + diphosphate. It carries out the reaction L-tyrosyl-[protein] + UTP = O-(5'-uridylyl)-L-tyrosyl-[protein] + diphosphate. Functionally, nucleotidyltransferase involved in the post-translational modification of proteins. It can catalyze the addition of adenosine monophosphate (AMP) or uridine monophosphate (UMP) to a protein, resulting in modifications known as AMPylation and UMPylation. This is Protein nucleotidyltransferase YdiU from Nitrobacter hamburgensis (strain DSM 10229 / NCIMB 13809 / X14).